The chain runs to 121 residues: uncharacterized protein (121 aa).

This sequence to M.jannaschii MJ0017 and MJ1466.

This is an uncharacterized protein from Aquifex aeolicus (strain VF5).